The following is a 98-amino-acid chain: NADH-ubiquinone oxidoreductase chain 4L (98 aa).

The next 3 helical transmembrane spans lie at 2-22 (PSIS…MLMF), 29-49 (SLLC…LIIL), and 61-81 (ILLL…LVMV).

The protein belongs to the complex I subunit 4L family. Core subunit of respiratory chain NADH dehydrogenase (Complex I) which is composed of 45 different subunits.

It is found in the mitochondrion inner membrane. The enzyme catalyses a ubiquinone + NADH + 5 H(+)(in) = a ubiquinol + NAD(+) + 4 H(+)(out). Its function is as follows. Core subunit of the mitochondrial membrane respiratory chain NADH dehydrogenase (Complex I) which catalyzes electron transfer from NADH through the respiratory chain, using ubiquinone as an electron acceptor. Part of the enzyme membrane arm which is embedded in the lipid bilayer and involved in proton translocation. The protein is NADH-ubiquinone oxidoreductase chain 4L (MT-ND4L) of Microcebus griseorufus (Gray-brown mouse lemur).